Here is a 149-residue protein sequence, read N- to C-terminus: Protein cornichon homolog 2 (149 aa).

3 consecutive transmembrane segments (helical) span residues Ile-3–Ala-23, Ala-59–Val-79, and Tyr-117–Ile-137.

Belongs to the cornichon family.

The protein localises to the endoplasmic reticulum membrane. It localises to the golgi apparatus membrane. Functionally, acts as a cargo receptor necessary for the transportation of secretory proteins from the endoplasmic reticulum (ER) in COPII-coated vesicles targeted to the Golgi apparatus. This Oryza sativa subsp. japonica (Rice) protein is Protein cornichon homolog 2.